The primary structure comprises 127 residues: Fluoride-specific ion channel FluC (127 aa).

4 consecutive transmembrane segments (helical) span residues 4 to 24, 35 to 55, 71 to 91, and 103 to 123; these read LLLA…LLSM, LGTL…FAWF, TGFC…VFLL, and VFVN…LFSA. Residues glycine 75 and threonine 78 each contribute to the Na(+) site.

This sequence belongs to the fluoride channel Fluc/FEX (TC 1.A.43) family.

It localises to the cell inner membrane. It catalyses the reaction fluoride(in) = fluoride(out). With respect to regulation, na(+) is not transported, but it plays an essential structural role and its presence is essential for fluoride channel function. In terms of biological role, fluoride-specific ion channel. Important for reducing fluoride concentration in the cell, thus reducing its toxicity. This chain is Fluoride-specific ion channel FluC, found in Escherichia coli O81 (strain ED1a).